The chain runs to 275 residues: Structure-specific endonuclease subunit SLX1 (275 aa).

The GIY-YIG domain occupies 12–95 (RFFGVYLLYC…QHPHASRRLA (84 aa)). The segment covering 148–161 (HVPLAFGPPPPQAP) has biased composition (pro residues). The segment at 148 to 179 (HVPLAFGPPPPQAPAPRRRAGPFDDAEPEPDQ) is disordered. The segment at 186-238 (CSLCAQTIQDEEGPLCCPHPGCLLRAHVICLAEEFLQEEPGQLLPLEGQCPCC) adopts an SLX1-type zinc-finger fold.

It belongs to the SLX1 family. In terms of assembly, forms a heterodimer with SLX4. The cofactor is a divalent metal cation.

The protein localises to the nucleus. Catalytic subunit of the SLX1-SLX4 structure-specific endonuclease that resolves DNA secondary structures generated during DNA repair and recombination. Has endonuclease activity towards branched DNA substrates, introducing single-strand cuts in duplex DNA close to junctions with ss-DNA. Has a preference for 5'-flap structures, and promotes symmetrical cleavage of static and migrating Holliday junctions (HJs). Resolves HJs by generating two pairs of ligatable, nicked duplex products. The polypeptide is Structure-specific endonuclease subunit SLX1 (Homo sapiens (Human)).